Reading from the N-terminus, the 135-residue chain is Helix-loop-helix protein 2 (135 aa).

The disordered stretch occupies residues Met-1–Ala-81. Residues Asp-10–Pro-21 are compositionally biased toward basic and acidic residues. Residues Lys-68–Ala-81 show a composition bias toward basic residues. Residues Lys-77–Leu-129 form the bHLH domain.

Homodimer. Interacts and may form heterodimers with STAT3. As to expression, expressed in developing neurons. Transiently expressed in the cerebellum during postnatal development, exclusively in the premigratory zone of the external granule layer where postmitotic neurons undergo initial stages of neuronal differentiation. Expression is not detected in mature neurons. Expressed in the anterior lobe of the adult pituitary.

The protein localises to the nucleus. In terms of biological role, transcription factor which binds the E box motif 5'-CA[TC][AG]TG-3'. Involved in regulating energy expenditure, body mass, voluntary physical activity, mating behavior and reproductive longevity, acting through the hypothalamic-pituitary-gonadal axis. Acts as a transcriptional activator of target genes, including Ndn, Pcsk1, Mc4r. Is also a transcriptional activator of KISS1. May act centrally to regulate function of both white and brown adipose tissue. Together with NHLH1, required to maintain migration and survival of cells in the anterior extramural migration stream (aes), which forms the precerebellar nuclei. Also, in concert with Nhlh1, may determine fate of gonadotropin releasing hormone-1 (GnRH-1) neurons. In Mus musculus (Mouse), this protein is Helix-loop-helix protein 2 (Nhlh2).